The following is a 1038-amino-acid chain: Pro-apoptotic serine protease nma111 (1038 aa).

A disordered region spans residues Met-1 to Tyr-47. The span at Glu-30 to Asn-43 shows a compositional bias: polar residues. The interval Val-82–Ile-275 is serine protease. Active-site charge relay system residues include His-120, Asp-151, and Ser-233. PDZ domains follow at residues Gln-289–Gln-374 and Val-877–Asp-958.

Belongs to the peptidase S1C family.

The protein resides in the nucleus. In terms of biological role, nuclear serine protease which mediates apoptosis. The chain is Pro-apoptotic serine protease nma111 (nma111) from Aspergillus terreus (strain NIH 2624 / FGSC A1156).